The following is a 175-amino-acid chain: Adenine phosphoribosyltransferase (175 aa).

Belongs to the purine/pyrimidine phosphoribosyltransferase family. As to quaternary structure, homodimer.

It localises to the cytoplasm. The catalysed reaction is AMP + diphosphate = 5-phospho-alpha-D-ribose 1-diphosphate + adenine. The protein operates within purine metabolism; AMP biosynthesis via salvage pathway; AMP from adenine: step 1/1. Its function is as follows. Catalyzes a salvage reaction resulting in the formation of AMP, that is energically less costly than de novo synthesis. The polypeptide is Adenine phosphoribosyltransferase (Clavibacter michiganensis subsp. michiganensis (strain NCPPB 382)).